A 294-amino-acid chain; its full sequence is Deubiquitinase OTUD6B (294 aa).

Disordered stretches follow at residues Met1–Leu46 and Ala67–Glu120. 2 stretches are compositionally biased toward polar residues: residues Lys27–Pro36 and Pro73–Thr86. Basic and acidic residues predominate over residues Lys111–Glu120. An OTU domain is found at Leu150–Leu287. The cys-loop stretch occupies residues Ile155–Cys161. Asp158 is an active-site residue. The active-site Nucleophile is the Cys161. The tract at residues Ile222–Leu232 is variable-loop. The tract at residues Tyr270–His280 is his-loop. Residue His280 is part of the active site.

The catalysed reaction is Thiol-dependent hydrolysis of ester, thioester, amide, peptide and isopeptide bonds formed by the C-terminal Gly of ubiquitin (a 76-residue protein attached to proteins as an intracellular targeting signal).. In terms of biological role, deubiquitinating enzyme that may play a role in the ubiquitin-dependent regulation of different cellular processes. The protein is Deubiquitinase OTUD6B (otud6b) of Xenopus tropicalis (Western clawed frog).